The following is a 91-amino-acid chain: Small ribosomal subunit protein uS19 (91 aa).

The protein belongs to the universal ribosomal protein uS19 family.

Functionally, protein S19 forms a complex with S13 that binds strongly to the 16S ribosomal RNA. The chain is Small ribosomal subunit protein uS19 from Ralstonia nicotianae (strain ATCC BAA-1114 / GMI1000) (Ralstonia solanacearum).